A 400-amino-acid polypeptide reads, in one-letter code: Acetate kinase (400 aa).

Position 10 (Asn-10) interacts with Mg(2+). Position 17 (Lys-17) interacts with ATP. Position 91 (Arg-91) interacts with substrate. Asp-148 (proton donor/acceptor) is an active-site residue. Residues 208-212 (HLGNG), 283-285 (DCR), and 331-335 (GIGEN) each bind ATP. Mg(2+) is bound at residue Glu-385.

Belongs to the acetokinase family. Homodimer. The cofactor is Mg(2+). It depends on Mn(2+) as a cofactor.

The protein resides in the cytoplasm. It carries out the reaction acetate + ATP = acetyl phosphate + ADP. It functions in the pathway metabolic intermediate biosynthesis; acetyl-CoA biosynthesis; acetyl-CoA from acetate: step 1/2. Catalyzes the formation of acetyl phosphate from acetate and ATP. Can also catalyze the reverse reaction. The chain is Acetate kinase from Shewanella frigidimarina (strain NCIMB 400).